The sequence spans 80 residues: Defensin-like protein 13 (80 aa).

Positions 1–29 are cleaved as a signal peptide; sequence MAKSATIVTLFFAALVFFAALEAPMVVEA. Glutamine 30 bears the Pyrrolidone carboxylic acid mark. Intrachain disulfides connect cysteine 33–cysteine 80, cysteine 44–cysteine 65, cysteine 50–cysteine 74, and cysteine 54–cysteine 76.

Belongs to the DEFL family. Forms oligomers in its native state. In terms of tissue distribution, expressed predominantly in siliques and dry seeds.

Its subcellular location is the secreted. Its function is as follows. Confers broad-spectrum resistance to pathogens. Possesses antifungal activity sensitive to inorganic cations in vitro. The protein is Defensin-like protein 13 (PDF1.1) of Arabidopsis thaliana (Mouse-ear cress).